Reading from the N-terminus, the 549-residue chain is Manganese transporter SMF2 (549 aa).

Positions 1–23 (MTSQEYEPIQWSDESQTNNDSVN) are disordered. The span at 12 to 22 (SDESQTNNDSV) shows a compositional bias: polar residues. The next 8 membrane-spanning stretches (helical) occupy residues 91-109 (LLFS…QYLC), 130-147 (FGLN…IIAT), 161-185 (ILFH…LLAY), 196-214 (IFEA…CFTV), 312-332 (LLIS…IVSG), 350-372 (IYNL…ALLF), 432-452 (ASQV…LYFT), and 521-541 (VLAI…LLGF).

The protein belongs to the NRAMP family.

Its subcellular location is the vacuole lumen. It is found in the vesicle. The protein localises to the cell membrane. The catalysed reaction is Mn(2+)(in) = Mn(2+)(out). Functionally, high-affinity manganese transporter involved in manganese uptake from the extracellular environment. This chain is Manganese transporter SMF2 (SMF2), found in Saccharomyces cerevisiae (strain ATCC 204508 / S288c) (Baker's yeast).